The chain runs to 765 residues: Protein transport protein Sec23A (765 aa).

Residues Cys-61, Cys-66, Cys-85, and Cys-88 each contribute to the Zn(2+) site. One copy of the Gelsolin-like repeat lies at 632-718 (PEPVLLDSSS…EHGGSQARFL (87 aa)).

This sequence belongs to the SEC23/SEC24 family. SEC23 subfamily. As to quaternary structure, COPII is composed of at least five proteins: the Sec23/24 complex, the Sec13/31 complex and Sar1.

It is found in the cytoplasmic vesicle. Its subcellular location is the COPII-coated vesicle membrane. The protein localises to the endoplasmic reticulum membrane. It localises to the cytoplasm. The protein resides in the cytosol. In terms of biological role, component of the coat protein complex II (COPII) which promotes the formation of transport vesicles from the endoplasmic reticulum (ER). The coat has two main functions, the physical deformation of the endoplasmic reticulum membrane into vesicles and the selection of cargo molecules for their transport to the Golgi complex. In Xenopus tropicalis (Western clawed frog), this protein is Protein transport protein Sec23A.